The following is a 268-amino-acid chain: Mitochondrial distribution and morphology protein 12 (268 aa).

One can recognise an SMP-LTD domain in the interval 1–266 (MSIDLEWCKL…FPNFHTIVMA (266 aa)). Positions 66–136 (EDDEEGSDRG…PPPAENPHPN (71 aa)) are disordered. The segment covering 102-111 (PATNVTSSLD) has biased composition (polar residues). Basic and acidic residues predominate over residues 112–121 (TRSDQPDDQK).

Belongs to the MDM12 family. As to quaternary structure, component of the ER-mitochondria encounter structure (ERMES) or MDM complex, composed of MMM1, MDM10, MDM12 and MDM34. An MMM1 homodimer associates with one molecule of MDM12 on each side in a pairwise head-to-tail manner, and the SMP-LTD domains of MMM1 and MDM12 generate a continuous hydrophobic tunnel for phospholipid trafficking.

The protein localises to the mitochondrion outer membrane. It is found in the endoplasmic reticulum membrane. Functionally, component of the ERMES/MDM complex, which serves as a molecular tether to connect the endoplasmic reticulum (ER) and mitochondria. Components of this complex are involved in the control of mitochondrial shape and protein biogenesis, and function in nonvesicular lipid trafficking between the ER and mitochondria. MDM12 is required for the interaction of the ER-resident membrane protein MMM1 and the outer mitochondrial membrane-resident beta-barrel protein MDM10. The MDM12-MMM1 subcomplex functions in the major beta-barrel assembly pathway that is responsible for biogenesis of all mitochondrial outer membrane beta-barrel proteins, and acts in a late step after the SAM complex. The MDM10-MDM12-MMM1 subcomplex further acts in the TOM40-specific pathway after the action of the MDM12-MMM1 complex. Essential for establishing and maintaining the structure of mitochondria and maintenance of mtDNA nucleoids. This chain is Mitochondrial distribution and morphology protein 12, found in Laccaria bicolor (strain S238N-H82 / ATCC MYA-4686) (Bicoloured deceiver).